The chain runs to 348 residues: Macrophage-capping protein (348 aa).

The residue at position 1 (M1) is an N-acetylmethionine. Residues 27–75 (EKLKPVPVAQENQGVFFSGDSYLVLHNGPEEVSHLHLWIGQQSSRDEQG) form a Gelsolin-like 1 repeat. Positions 137–146 (KKLYQVKGKK) match the Nuclear localization signal motif. Gelsolin-like repeat units follow at residues 148-188 (IRAT…LERN) and 261-307 (MNLT…KERQ). S337 bears the Phosphoserine mark.

This sequence belongs to the villin/gelsolin family. As to quaternary structure, interacts with NUP62. Interacts with NUTF2 and RAN; involved in CAPG nuclear import. The N-terminus is blocked. In terms of tissue distribution, macrophages and macrophage-like cells.

It is found in the nucleus. Its subcellular location is the cytoplasm. The protein localises to the melanosome. It localises to the cell projection. The protein resides in the lamellipodium. It is found in the ruffle. Its function is as follows. Calcium-sensitive protein which reversibly blocks the barbed ends of actin filaments but does not sever preformed actin filaments. May play an important role in macrophage function. May play a role in regulating cytoplasmic and/or nuclear structures through potential interactions with actin. May bind DNA. In Homo sapiens (Human), this protein is Macrophage-capping protein (CAPG).